Here is an 801-residue protein sequence, read N- to C-terminus: U-box domain-containing protein 44 (801 aa).

Residues 22–101 enclose the U-box domain; sequence HIYEAFICPL…EEWRSRNDAA (80 aa). 9 ARM repeats span residues 134-173, 176-215, 218-259, 261-300, 301-340, 342-386, 390-429, 435-475, and 480-521; these read RSNR…VVVE, DESK…ELSK, ALCE…NMER, EEIV…ELPL, NNDV…KISS, EGSA…NIVN, DFDK…GLTS, PKVV…NLSP, and ELAK…ELPD.

In terms of assembly, interacts with AAO3. Binds to SD129. In terms of tissue distribution, expressed in leaves, root vasculature and guard cells.

The catalysed reaction is S-ubiquitinyl-[E2 ubiquitin-conjugating enzyme]-L-cysteine + [acceptor protein]-L-lysine = [E2 ubiquitin-conjugating enzyme]-L-cysteine + N(6)-ubiquitinyl-[acceptor protein]-L-lysine.. Its pathway is protein modification; protein ubiquitination. Functions as an E3 ubiquitin-protein ligase. Prevents premature senescence probably by targeting proteins involved in this process for degradation. Promotes the degradation of AAO3 and thus represses abscisic acid (ABA) biosynthesis. This Arabidopsis thaliana (Mouse-ear cress) protein is U-box domain-containing protein 44 (PUB44).